Reading from the N-terminus, the 156-residue chain is Prolamin PPROL 17D (156 aa).

The N-terminal stretch at 1–19 (MKIIFFFALLAIAACSASA) is a signal peptide. Gln-20 is modified (pyrrolidone carboxylic acid).

Belongs to the prolamin family.

It is found in the vacuole. The protein resides in the aleurone grain. Functionally, seed storage protein; serves as a source of nitrogen, carbon and sulfur for the young developing seedling. The polypeptide is Prolamin PPROL 17D (Oryza sativa subsp. japonica (Rice)).